Here is a 506-residue protein sequence, read N- to C-terminus: Methylthioalkylmalate synthase 2, chloroplastic (506 aa).

The transit peptide at 1-49 (MASSLLTSSGMIPTTGSTVVGRSVLPFQSSLHSLRLTHSYKNPALFISC) directs the protein to the chloroplast. Positions 85 to 359 (VRVFDTTLRD…YTRIDTRQIM (275 aa)) constitute a Pyruvate carboxyltransferase domain.

This sequence belongs to the alpha-IPM synthase/homocitrate synthase family.

The protein localises to the plastid. Its subcellular location is the chloroplast. The enzyme catalyses an omega-(methylsulfanyl)-2-oxoalkanoate + acetyl-CoA + H2O = a 2-(omega-methylsulfanyl)alkylmalate + CoA + H(+). Its function is as follows. Catalyzes only the first methionine chain elongation cycle. The sequence is that of Methylthioalkylmalate synthase 2, chloroplastic (MAM2) from Arabidopsis thaliana (Mouse-ear cress).